We begin with the raw amino-acid sequence, 257 residues long: Phosphonates import ATP-binding protein PhnC (257 aa).

The ABC transporter domain maps to 2-246; sequence IEFRNVSKVY…KFAEIYGDVA (245 aa). 35–42 is an ATP binding site; sequence GLSGAGKS.

It belongs to the ABC transporter superfamily. Phosphonates importer (TC 3.A.1.9.1) family. In terms of assembly, the complex is composed of two ATP-binding proteins (PhnC), two transmembrane proteins (PhnE) and a solute-binding protein (PhnD).

The protein resides in the cell membrane. It carries out the reaction phosphonate(out) + ATP + H2O = phosphonate(in) + ADP + phosphate + H(+). Its function is as follows. Part of the ABC transporter complex PhnCDE involved in phosphonates import. Responsible for energy coupling to the transport system. The sequence is that of Phosphonates import ATP-binding protein PhnC from Bacillus cereus (strain ATCC 14579 / DSM 31 / CCUG 7414 / JCM 2152 / NBRC 15305 / NCIMB 9373 / NCTC 2599 / NRRL B-3711).